The primary structure comprises 130 residues: Small ribosomal subunit protein uS9 (130 aa).

Belongs to the universal ribosomal protein uS9 family.

This chain is Small ribosomal subunit protein uS9, found in Bacillus cytotoxicus (strain DSM 22905 / CIP 110041 / 391-98 / NVH 391-98).